Here is a 259-residue protein sequence, read N- to C-terminus: Sorbitol-6-phosphate 2-dehydrogenase (259 aa).

4-33 (VAVVIGGGQTLGAFLCHGLAAEGYRVAVVD) contacts NAD(+). Residue S141 participates in substrate binding. The active-site Proton acceptor is the Y154.

It belongs to the short-chain dehydrogenases/reductases (SDR) family. As to quaternary structure, homotetramer.

It carries out the reaction D-sorbitol 6-phosphate + NAD(+) = beta-D-fructose 6-phosphate + NADH + H(+). Its pathway is carbohydrate metabolism; D-sorbitol degradation; D-fructose 6-phosphate from D-sorbitol 6-phosphate: step 1/1. In Escherichia coli (strain K12), this protein is Sorbitol-6-phosphate 2-dehydrogenase (srlD).